A 243-amino-acid polypeptide reads, in one-letter code: F-box protein pof15 (243 aa).

Residues 28-73 form the F-box domain; it reads QTSSTLLPVEVIDSVMQYLPAHDVIQSSFASYPLTLIANKIIRARL.

It functions in the pathway protein modification; protein ubiquitination. Its function is as follows. Probable substrate recognition component of a SCF (SKP1-CUL1-F-box protein) E3 ubiquitin-protein ligase complex that mediates the ubiquitination and subsequent proteasomal degradation of target proteins. The protein is F-box protein pof15 (pof15) of Schizosaccharomyces pombe (strain 972 / ATCC 24843) (Fission yeast).